Here is a 428-residue protein sequence, read N- to C-terminus: 3-phosphoshikimate 1-carboxyvinyltransferase (428 aa).

3-phosphoshikimate is bound by residues Lys-20, Ser-21, and Arg-25. Residue Lys-20 coordinates phosphoenolpyruvate. Phosphoenolpyruvate is bound by residues Gly-92 and Arg-120. 4 residues coordinate 3-phosphoshikimate: Ser-166, Gln-168, Asp-314, and Lys-341. Position 168 (Gln-168) interacts with phosphoenolpyruvate. The active-site Proton acceptor is Asp-314. Phosphoenolpyruvate-binding residues include Arg-345 and Arg-387.

This sequence belongs to the EPSP synthase family. In terms of assembly, monomer.

It is found in the cytoplasm. The enzyme catalyses 3-phosphoshikimate + phosphoenolpyruvate = 5-O-(1-carboxyvinyl)-3-phosphoshikimate + phosphate. The protein operates within metabolic intermediate biosynthesis; chorismate biosynthesis; chorismate from D-erythrose 4-phosphate and phosphoenolpyruvate: step 6/7. In terms of biological role, catalyzes the transfer of the enolpyruvyl moiety of phosphoenolpyruvate (PEP) to the 5-hydroxyl of shikimate-3-phosphate (S3P) to produce enolpyruvyl shikimate-3-phosphate and inorganic phosphate. The polypeptide is 3-phosphoshikimate 1-carboxyvinyltransferase (Listeria innocua serovar 6a (strain ATCC BAA-680 / CLIP 11262)).